The following is a 452-amino-acid chain: Bifunctional protein GlmU (452 aa).

The tract at residues 1–224 is pyrophosphorylase; that stretch reads MNIVILAAGM…VWETHGVNSK (224 aa). Residues 6–9, lysine 20, glutamine 71, 76–77, 98–100, glycine 135, glutamate 149, asparagine 164, and asparagine 222 each bind UDP-N-acetyl-alpha-D-glucosamine; these read LAAG, GT, and YGD. Aspartate 100 is a Mg(2+) binding site. Mg(2+) is bound at residue asparagine 222. Residues 225 to 245 form a linker region; the sequence is VQLAELERVHQNNIARALLEH. The interval 246-452 is N-acetyltransferase; sequence GVTLADPARI…GWQRPVKIKK (207 aa). The UDP-N-acetyl-alpha-D-glucosamine site is built by arginine 328 and lysine 346. Residue histidine 358 is the Proton acceptor of the active site. Tyrosine 361 and asparagine 372 together coordinate UDP-N-acetyl-alpha-D-glucosamine. Residues alanine 375, 381–382, serine 400, alanine 418, and arginine 435 each bind acetyl-CoA; that span reads NY.

It in the N-terminal section; belongs to the N-acetylglucosamine-1-phosphate uridyltransferase family. In the C-terminal section; belongs to the transferase hexapeptide repeat family. As to quaternary structure, homotrimer. The cofactor is Mg(2+).

The protein resides in the cytoplasm. The enzyme catalyses alpha-D-glucosamine 1-phosphate + acetyl-CoA = N-acetyl-alpha-D-glucosamine 1-phosphate + CoA + H(+). The catalysed reaction is N-acetyl-alpha-D-glucosamine 1-phosphate + UTP + H(+) = UDP-N-acetyl-alpha-D-glucosamine + diphosphate. It participates in nucleotide-sugar biosynthesis; UDP-N-acetyl-alpha-D-glucosamine biosynthesis; N-acetyl-alpha-D-glucosamine 1-phosphate from alpha-D-glucosamine 6-phosphate (route II): step 2/2. It functions in the pathway nucleotide-sugar biosynthesis; UDP-N-acetyl-alpha-D-glucosamine biosynthesis; UDP-N-acetyl-alpha-D-glucosamine from N-acetyl-alpha-D-glucosamine 1-phosphate: step 1/1. The protein operates within bacterial outer membrane biogenesis; LPS lipid A biosynthesis. Functionally, catalyzes the last two sequential reactions in the de novo biosynthetic pathway for UDP-N-acetylglucosamine (UDP-GlcNAc). The C-terminal domain catalyzes the transfer of acetyl group from acetyl coenzyme A to glucosamine-1-phosphate (GlcN-1-P) to produce N-acetylglucosamine-1-phosphate (GlcNAc-1-P), which is converted into UDP-GlcNAc by the transfer of uridine 5-monophosphate (from uridine 5-triphosphate), a reaction catalyzed by the N-terminal domain. This is Bifunctional protein GlmU from Herminiimonas arsenicoxydans.